A 307-amino-acid chain; its full sequence is Ribosomal RNA small subunit methyltransferase A (307 aa).

Residues N35, V37, G62, E83, D113, and N136 each contribute to the S-adenosyl-L-methionine site.

It belongs to the class I-like SAM-binding methyltransferase superfamily. rRNA adenine N(6)-methyltransferase family. RsmA subfamily.

The protein localises to the cytoplasm. It catalyses the reaction adenosine(1518)/adenosine(1519) in 16S rRNA + 4 S-adenosyl-L-methionine = N(6)-dimethyladenosine(1518)/N(6)-dimethyladenosine(1519) in 16S rRNA + 4 S-adenosyl-L-homocysteine + 4 H(+). Specifically dimethylates two adjacent adenosines (A1518 and A1519) in the loop of a conserved hairpin near the 3'-end of 16S rRNA in the 30S particle. May play a critical role in biogenesis of 30S subunits. The polypeptide is Ribosomal RNA small subunit methyltransferase A (Bifidobacterium longum subsp. infantis (strain ATCC 15697 / DSM 20088 / JCM 1222 / NCTC 11817 / S12)).